The chain runs to 404 residues: uncharacterized protein (404 aa).

2 disordered regions span residues 261–307 (VSTG…SPSL) and 320–340 (KKSH…GGAD). 3 positions are modified to phosphoserine: Ser267, Ser276, and Ser279. Thr290 and Thr293 each carry phosphothreonine. Phosphoserine occurs at positions 304, 306, 324, 358, and 362. Over residues 320–336 (KKSHSANDSEEFFREDD) the composition is skewed to basic and acidic residues.

This is an uncharacterized protein from Homo sapiens (Human).